We begin with the raw amino-acid sequence, 469 residues long: Argininosuccinate lyase (469 aa).

This sequence belongs to the lyase 1 family. Argininosuccinate lyase subfamily.

The protein resides in the cytoplasm. The catalysed reaction is 2-(N(omega)-L-arginino)succinate = fumarate + L-arginine. Its pathway is amino-acid biosynthesis; L-arginine biosynthesis; L-arginine from L-ornithine and carbamoyl phosphate: step 3/3. This Burkholderia vietnamiensis (strain G4 / LMG 22486) (Burkholderia cepacia (strain R1808)) protein is Argininosuccinate lyase.